The following is a 908-amino-acid chain: WD repeat-containing protein 44 (908 aa).

The segment at 1 to 163 (MMPLKMCTWG…SSADQLDASK (163 aa)) is binding activity. Phosphoserine is present on residues Ser-17, Ser-40, Ser-61, Ser-71, Ser-86, and Ser-116. 2 stretches are compositionally biased toward polar residues: residues 108 to 120 (QQGSRKADSQNAA) and 148 to 157 (NNLTEVSSAD). Disordered regions lie at residues 108–158 (QQGS…SADQ), 202–273 (APAK…KDNI), 309–341 (TAQENGKAPDVQTVAGEVMGPQRPRSNSGRELT), 391–418 (VSNDATQSDDEEKLQSQQTDTDGGRLKQ), and 454–474 (DEVFHTDQDDPSSSDDEGMPY). A phosphothreonine mark is found at Thr-151 and Thr-211. The tract at residues 203 to 249 (PAKPPRHLTPEPDIVASTKKPVPARPPPPTNFPPPRPPPPSRPAPPP) is important for interaction with ARHGAP26 AND ARHGAP10. A compositionally biased stretch (pro residues) spans 225–248 (PARPPPPTNFPPPRPPPPSRPAPP). Phosphoserine is present on Ser-254. A compositionally biased stretch (basic and acidic residues) spans 254 to 270 (SDLEFEALKTPDLDVPK). Thr-263 carries the post-translational modification Phosphothreonine. The segment at 326 to 339 (VMGPQRPRSNSGRE) is important for interaction with RAB11A. Phosphoserine is present on residues Ser-334 and Ser-336. 2 positions are modified to phosphothreonine: Thr-341 and Thr-396. Phosphoserine is present on residues Ser-398, Ser-465, Ser-466, and Ser-467. Residues 462-471 (DDPSSSDDEG) show a composition bias toward acidic residues. Tyr-474 is modified (phosphotyrosine). One copy of the WD 1 repeat lies at 504-543 (EHMGAVWTMKFSHCGRLLASAGQDNIVRIWALKNAFDYFN). A disordered region spans residues 552 to 587 (EGRVSPSPSQESLSSSKSDTDMGVCSGTDEDPDDKN). Ser-556 and Ser-560 each carry phosphoserine. Positions 556-568 (SPSPSQESLSSSK) are enriched in low complexity. WD repeat units lie at residues 600 to 638 (GHTADLLDLSWSKNYFLLSSSMDKTVRLWHISRRECLCC), 640 to 680 (QHID…VALW), 685 to 724 (GQTKLITAANFCQNGKYAVIGTYDGRCIFYDTEHLKYHTQ), 735 to 774 (KVGRKITGIEPLPGENKILVTSNDSRIRLYDLRDLSLSMK), and 779 to 818 (VNSSSQIKASFSHDFTYLVSGSEDKYVYIWSTYHDLSKFT).

Interacts preferentially with the GTP-bound form of RAB11 when membrane-associated. Interacts with GRAF1/ARHGAP26 or GRAF2/ARHGAP10; the interaction connects the endoplasmic reticulum (ER) with the endosomal tubule. Interacts with VAPA (via MSP domain) or VAPB (via MSP domain); the interaction connects the ER with the endosomal tubule. Does not bind to other Rab and Rho small G proteins. Phosphorylated by ATK1; the phosphorylation stabilizes its interaction with RAB11A and RAB11B. In terms of tissue distribution, expressed in heart; brain; spleen; lung; liver; muscle and kidney.

The protein resides in the cytoplasm. It is found in the cytosol. The protein localises to the perinuclear region. Its subcellular location is the endosome membrane. It localises to the golgi apparatus. The protein resides in the trans-Golgi network. Its function is as follows. Downstream effector for Rab11 which regulates Rab11 intracellular membrane trafficking functions such as endocytic recycling, intracellular ciliogenesis and protein export. ATK1-mediated phosphorylation of WDR44 induces binding to Rab11 which activates endocytic recycling of transferrin receptor back to the plasma membrane. When bound to Rab11, prevents the formation of the ciliogenic Rab11-Rabin8/RAB3IP-RAB11FIP3 complex, therefore inhibiting preciliary trafficking and ciliogenesis. May participate in neo-synthesized protein export by connecting the endoplasmic reticulum (ER) with the endosomal tubule via direct interactions with the integral ER proteins VAPA or VAPB and the endosomal protein GRAFs (GRAF1/ARHGAP26 or GRAF2/ARHGAP10), which facilitates the transfer of proteins such as E-cadherin, MPP14 and CFTR into a Rab8-Rab10-Rab11-dependent export route. The chain is WD repeat-containing protein 44 from Rattus norvegicus (Rat).